A 154-amino-acid polypeptide reads, in one-letter code: Myoglobin (154 aa).

One can recognise a Globin domain in the interval 2–148 (VLTDAEWHLV…FRKDIAAKYK (147 aa)). His65 serves as a coordination point for nitrite. His65 serves as a coordination point for O2. Thr68 is modified (phosphothreonine). His94 lines the heme b pocket.

This sequence belongs to the globin family. In terms of assembly, monomeric.

Its subcellular location is the cytoplasm. The protein resides in the sarcoplasm. It catalyses the reaction Fe(III)-heme b-[protein] + nitric oxide + H2O = Fe(II)-heme b-[protein] + nitrite + 2 H(+). It carries out the reaction H2O2 + AH2 = A + 2 H2O. Functionally, monomeric heme protein which primary function is to store oxygen and facilitate its diffusion within muscle tissues. Reversibly binds oxygen through a pentacoordinated heme iron and enables its timely and efficient release as needed during periods of heightened demand. Depending on the oxidative conditions of tissues and cells, and in addition to its ability to bind oxygen, it also has a nitrite reductase activity whereby it regulates the production of bioactive nitric oxide. Under stress conditions, like hypoxia and anoxia, it also protects cells against reactive oxygen species thanks to its pseudoperoxidase activity. The chain is Myoglobin (MB) from Balaenoptera physalus (Fin whale).